The primary structure comprises 396 residues: Maltose/maltodextrin-binding periplasmic protein (396 aa).

Residues 1 to 26 (MKIKTGVGILALSALTTMMISAPALA) form the signal peptide.

Belongs to the bacterial solute-binding protein 1 family. The complex is composed of two ATP-binding proteins (MalK), two transmembrane proteins (MalG and MalF) and a solute-binding protein (MalE).

The protein resides in the periplasm. Part of the ABC transporter complex MalEFGK involved in maltose/maltodextrin import. Binds maltose and higher maltodextrins. The sequence is that of Maltose/maltodextrin-binding periplasmic protein (malE) from Salmonella typhimurium (strain LT2 / SGSC1412 / ATCC 700720).